A 463-amino-acid chain; its full sequence is Nicotinate phosphoribosyltransferase pncB2 (463 aa).

At H202 the chain carries Phosphohistidine.

This sequence belongs to the NAPRTase family. In terms of processing, transiently phosphorylated on a His residue during the reaction cycle. Phosphorylation strongly increases the affinity for substrates and increases the rate of nicotinate D-ribonucleotide production. Dephosphorylation regenerates the low-affinity form of the enzyme, leading to product release.

The enzyme catalyses nicotinate + 5-phospho-alpha-D-ribose 1-diphosphate + ATP + H2O = nicotinate beta-D-ribonucleotide + ADP + phosphate + diphosphate. Its pathway is cofactor biosynthesis; NAD(+) biosynthesis; nicotinate D-ribonucleotide from nicotinate: step 1/1. Its function is as follows. Involved in the Preiss-Handler pathway, which is a recycling route that permits the salvage of free nicotinamide (NM) and nicotinic acid (Na) involved in the NAD biosynthesis. Catalyzes the synthesis of beta-nicotinate D-ribonucleotide from nicotinate and 5-phospho-D-ribose 1-phosphate at the expense of ATP. It is not able to use nicotinamide. PncB2 appears to be responsible for the increased salvage synthesis of NAD during infection of host tissues. This chain is Nicotinate phosphoribosyltransferase pncB2 (pncB2), found in Mycobacterium tuberculosis (strain CDC 1551 / Oshkosh).